The primary structure comprises 957 residues: Calsyntenin-3 (957 aa).

Positions 1–19 (MTPLLFPLLLASLLPSSSC) are cleaved as a signal peptide. The Extracellular portion of the chain corresponds to 20 to 848 (NKANKHKPWI…SHRNSMVPSA (829 aa)). 2 Cadherin domains span residues 29–145 (IEAE…APVF) and 146–246 (VERL…KPSW). Residues N299, N347, and N508 are each glycosylated (N-linked (GlcNAc...) asparagine). The helical transmembrane segment at 849-869 (ATLIIVVCVGFLVLMVVLGLV) threads the bilayer. The Cytoplasmic portion of the chain corresponds to 870-957 (RIHSLHRRVS…RIIETPPHRY (88 aa)). A disordered region spans residues 919 to 957 (CVAGAAGGQQDDEDSSDSEAADSPSSDERRIIETPPHRY). Over residues 928 to 938 (QDDEDSSDSEA) the composition is skewed to acidic residues. Over residues 944-957 (SDERRIIETPPHRY) the composition is skewed to basic and acidic residues.

The protein belongs to the calsyntenin family. As to quaternary structure, interacts (via cadherin domains) with both alpha and beta isoforms of neurexins (NRXN1, NRXN2 and NRXN3). Directly interacts with APBA2. Forms a tripartite complex with APBA2 and APP. Interacts with low affinity with KLC1. Interacts with SLC23A2/SVCT2. Proteolytically processed under normal cellular conditions. A primary zeta-cleavage generates a large extracellular (soluble) N-terminal domain (sAlc) and a short C-terminal transmembrane fragment (CTF1). A secondary cleavage catalyzed by gamma-secretase within the transmembrane domain releases the beta-Alc-beta chain in the extracellular milieu and produces an intracellular fragment (AlcICD). This processing is strongly suppressed in the tripartite complex formed with APBA2 and APP, which seems to prevent the association with gamma-secretase.

It is found in the postsynaptic cell membrane. The protein resides in the endoplasmic reticulum membrane. Its subcellular location is the golgi apparatus membrane. The protein localises to the cell projection. It localises to the dendrite. Its function is as follows. Postsynaptic adhesion molecule that binds to presynaptic neurexins to mediate both excitatory and inhibitory synapse formation. Promotes synapse development by acting as a cell adhesion molecule at the postsynaptic membrane, which associates with both neurexin-alpha and neurexin-beta proteins at the presynaptic membrane. Regulates the balance between excitatory and inhibitory synapses by inhibiting formation of excitatory parallel-fiber synapses and promoting formation of inhibitory synapses in the same neuron. May also be involved in ascorbate (vitamin C) uptake via its interaction with SLC23A2/SVCT2. Complex formation with APBA2 and APP, stabilizes APP metabolism and enhances APBA2-mediated suppression of beta-APP40 secretion, due to the retardation of intracellular APP maturation. The protein is Calsyntenin-3 (CLSTN3) of Bos taurus (Bovine).